Consider the following 197-residue polypeptide: ATP-dependent Clp protease proteolytic subunit 2 (197 aa).

Catalysis depends on serine 96, which acts as the Nucleophile. Histidine 121 is a catalytic residue.

This sequence belongs to the peptidase S14 family. Fourteen ClpP subunits assemble into 2 heptameric rings which stack back to back to give a disk-like structure with a central cavity, resembling the structure of eukaryotic proteasomes.

It is found in the cytoplasm. The enzyme catalyses Hydrolysis of proteins to small peptides in the presence of ATP and magnesium. alpha-casein is the usual test substrate. In the absence of ATP, only oligopeptides shorter than five residues are hydrolyzed (such as succinyl-Leu-Tyr-|-NHMec, and Leu-Tyr-Leu-|-Tyr-Trp, in which cleavage of the -Tyr-|-Leu- and -Tyr-|-Trp bonds also occurs).. Its function is as follows. Cleaves peptides in various proteins in a process that requires ATP hydrolysis. Has a chymotrypsin-like activity. Plays a major role in the degradation of misfolded proteins. This Parasynechococcus marenigrum (strain WH8102) protein is ATP-dependent Clp protease proteolytic subunit 2.